The sequence spans 332 residues: Acetyl-coenzyme A carboxylase carboxyl transferase subunit alpha (332 aa).

One can recognise a CoA carboxyltransferase C-terminal domain in the interval 44–298 (QLESRAQNLR…KETLVNNLEE (255 aa)).

This sequence belongs to the AccA family. Acetyl-CoA carboxylase is a heterohexamer composed of biotin carboxyl carrier protein (AccB), biotin carboxylase (AccC) and two subunits each of ACCase subunit alpha (AccA) and ACCase subunit beta (AccD).

It is found in the cytoplasm. It carries out the reaction N(6)-carboxybiotinyl-L-lysyl-[protein] + acetyl-CoA = N(6)-biotinyl-L-lysyl-[protein] + malonyl-CoA. The protein operates within lipid metabolism; malonyl-CoA biosynthesis; malonyl-CoA from acetyl-CoA: step 1/1. Its function is as follows. Component of the acetyl coenzyme A carboxylase (ACC) complex. First, biotin carboxylase catalyzes the carboxylation of biotin on its carrier protein (BCCP) and then the CO(2) group is transferred by the carboxyltransferase to acetyl-CoA to form malonyl-CoA. The polypeptide is Acetyl-coenzyme A carboxylase carboxyl transferase subunit alpha (Crocosphaera subtropica (strain ATCC 51142 / BH68) (Cyanothece sp. (strain ATCC 51142))).